The following is a 421-amino-acid chain: UDP-N-acetylglucosamine 1-carboxyvinyltransferase (421 aa).

22–23 (KN) contributes to the phosphoenolpyruvate binding site. Arg-92 lines the UDP-N-acetyl-alpha-D-glucosamine pocket. Catalysis depends on Asp-116, which acts as the Proton donor. UDP-N-acetyl-alpha-D-glucosamine-binding positions include 121 to 125 (RPIDQ), Asp-307, and Ile-330.

The protein belongs to the EPSP synthase family. MurA subfamily.

It is found in the cytoplasm. It carries out the reaction phosphoenolpyruvate + UDP-N-acetyl-alpha-D-glucosamine = UDP-N-acetyl-3-O-(1-carboxyvinyl)-alpha-D-glucosamine + phosphate. Its pathway is cell wall biogenesis; peptidoglycan biosynthesis. Functionally, cell wall formation. Adds enolpyruvyl to UDP-N-acetylglucosamine. This chain is UDP-N-acetylglucosamine 1-carboxyvinyltransferase, found in Lactobacillus johnsonii (strain CNCM I-12250 / La1 / NCC 533).